The sequence spans 215 residues: Cytochrome b6 (215 aa).

Residues 32–52 (IFYCLGGITLTCFLVQVATGF) form a helical membrane-spanning segment. Cysteine 35 lines the heme c pocket. Heme b-binding residues include histidine 86 and histidine 100. 3 helical membrane passes run 90–110 (ASMMVLMMILHVFRVYLTGGF), 116–136 (LTWVTGVVLAVLTASFGVTGY), and 186–206 (LHTFVLPLLTAVFMLMHFPMI). Residues histidine 187 and histidine 202 each coordinate heme b.

The protein belongs to the cytochrome b family. PetB subfamily. The 4 large subunits of the cytochrome b6-f complex are cytochrome b6, subunit IV (17 kDa polypeptide, PetD), cytochrome f and the Rieske protein, while the 4 small subunits are PetG, PetL, PetM and PetN. The complex functions as a dimer. Heme b is required as a cofactor. It depends on heme c as a cofactor.

It is found in the plastid. The protein localises to the chloroplast thylakoid membrane. Component of the cytochrome b6-f complex, which mediates electron transfer between photosystem II (PSII) and photosystem I (PSI), cyclic electron flow around PSI, and state transitions. In Saccharum hybrid (Sugarcane), this protein is Cytochrome b6.